We begin with the raw amino-acid sequence, 112 residues long: Protein preY, mitochondrial (112 aa).

The transit peptide at 1–34 directs the protein to the mitochondrion; that stretch reads MLSATCRRLAPALRRLRALSAVAGRFLQVPGARL. Positions 49-95 constitute a TRM112 domain; sequence HPALLQFLVCPLSKKPLRYEASTNELVNEELGIAYPIIDGIPNMIPQ.

The protein belongs to the PREY family. As to quaternary structure, interacts (via TRM112 domain) with NDUFAF5; the interaction is direct and stabilizes NDUFAF5 protein. Interacts with COQ5; the interaction is direct, stabilizes COQ5 protein and associates PYURF with COQ enzyme complex.

It localises to the mitochondrion. Functionally, in mitochondria, S-adenosylmethionine-dependent methyltransferase chaperone that supports both coenzyme Q biosynthesis, by stabilizing its components, such as COQ5, and NADH:ubiquinone oxidoreductase complex (complex I, MT-ND1) assembly, by stabilizing complex I assembly factors, such as NDUFAF5. The sequence is that of Protein preY, mitochondrial (Pyurf) from Mus musculus (Mouse).